A 268-amino-acid polypeptide reads, in one-letter code: MGPWTLLLLHLPLVVSMLPAPTNVSIVSFNLEHTLTWLPGPETPDNTHFTVQSLRKNSWQLVKGCARLKTRQSCDLTNTFKDPFYHYKARVQAITTTQKSNRSLSMLFYPLTDTLLGPPVVSVSGCGNCPLLQVTPPTSRGLQRSLSPTQLYYRQFTCKVRRTRDGSQFSMWVTSTEKTVIGYLEPGAEYCVTVTPSTSFNPHSVPSEPHCAFTSPTAANTVPVVLSVLCAFSLLVVLLCGIVVYSGRLLCMHKPLPKTLSSVPLCGG.

An N-terminal signal peptide occupies residues 1–16; that stretch reads MGPWTLLLLHLPLVVS. Residues 17 to 223 are Extracellular-facing; it reads MLPAPTNVSI…TSPTAANTVP (207 aa). 2 consecutive Fibronectin type-III domains span residues 18–114 and 115–217; these read LPAP…LTDT and LLGP…TSPT. Intrachain disulfides connect Cys65-Cys74 and Cys191-Cys211. A helical transmembrane segment spans residues 224–244; that stretch reads VVLSVLCAFSLLVVLLCGIVV. Residues 245 to 268 lie on the Cytoplasmic side of the membrane; the sequence is YSGRLLCMHKPLPKTLSSVPLCGG.

Belongs to the type II cytokine receptor family. In terms of assembly, heterodimer with IFNAR1; forming the receptor for type I interferon.

Its subcellular location is the cell membrane. The protein localises to the cytoplasm. Its function is as follows. Together with IFNAR1, forms the heterodimeric receptor for type I interferons (including interferons alpha, beta, epsilon, omega and kappa). Type I interferon binding activates the JAK-STAT signaling cascade, resulting in transcriptional activation or repression of interferon-regulated genes that encode the effectors of the interferon response. Mechanistically, type I interferon-binding brings the IFNAR1 and IFNAR2 subunits into close proximity with one another, driving their associated Janus kinases (JAKs) (TYK2 bound to IFNAR1 and JAK1 bound to IFNAR2) to cross-phosphorylate one another. The activated kinases phosphorylate specific tyrosine residues on the intracellular domains of IFNAR1 and IFNAR2, forming docking sites for the STAT transcription factors (STAT1, STAT2 and STAT). STAT proteins are then phosphorylated by the JAKs, promoting their translocation into the nucleus to regulate expression of interferon-regulated genes. This chain is Interferon alpha/beta receptor 2, found in Oncorhynchus mykiss (Rainbow trout).